We begin with the raw amino-acid sequence, 230 residues long: Rab15 effector protein (230 aa).

The N-myristoyl glycine moiety is linked to residue Gly2.

As to quaternary structure, interacts with the GTP-bound form of RAB15, RAB3A-D and RAB34.

It is found in the early endosome membrane. In terms of biological role, effector that interacts with Rab GTPases in their active form (GTP-bound) including RAB15, RAB3A-D and RAB34. Controls downstream signaling such as cell proliferation and cell migration. Also regulates transferrin receptor recycling from the endocytic recycling compartment. In Mus musculus (Mouse), this protein is Rab15 effector protein.